A 410-amino-acid polypeptide reads, in one-letter code: Chloroacetanilide N-alkylformylase, ferredoxin reductase component (410 aa).

Gly14, Asp36, Lys49, Val82, Arg130, Asp279, and Val298 together coordinate FAD.

The protein belongs to the FAD-dependent oxidoreductase family. As to quaternary structure, the chloroacetanilide N-alkylformylase multicomponent enzyme system is composed of an oxygenase component (CndA) and an electron transfer component formed by a ferredoxin reductase (CndC1) and a ferredoxin (CndB1). In vitro, chloroacetanilide N-alkylformylase assays in which CndB1 is substituted for CndB2 demonstrate that the two enzymes possess nearly identical activities. It depends on FAD as a cofactor.

The catalysed reaction is 2 reduced [2Fe-2S]-[ferredoxin] + NAD(+) + H(+) = 2 oxidized [2Fe-2S]-[ferredoxin] + NADH. Functionally, component of the chloroacetanilide N-alkylformylase multicomponent enzyme system involved in the degradation of chloroacetanilide herbicides (N-alkoxyalkyl-N-chloroacetyl-substituted aniline derivatives). In vitro, catalyzes the transfers of electrons from ferredoxin (CndB1) to NADH. N-dealkylase utilizes NADH, but not NADPH, as the electron donor. The protein is Chloroacetanilide N-alkylformylase, ferredoxin reductase component of Rhizorhabdus wittichii (strain DC-6 / KACC 16600) (Sphingomonas wittichii).